Here is a 492-residue protein sequence, read N- to C-terminus: Transmembrane protease serine 2 (492 aa).

Residues 1–84 are Cytoplasmic-facing; that stretch reads MALNSGSPPA…TVCTSKTKKA (84 aa). Residues 85-105 traverse the membrane as a helical; Signal-anchor for type II membrane protein segment; the sequence is LCITLTLGTFLVGAALAAGLL. At 106 to 492 the chain is on the extracellular side; sequence WKFMGSKCSN…WIYRQMRADG (387 aa). 9 disulfide bridges follow: cysteine 113/cysteine 126, cysteine 120/cysteine 139, cysteine 133/cysteine 148, cysteine 172/cysteine 231, cysteine 185/cysteine 241, cysteine 244/cysteine 365, cysteine 281/cysteine 297, cysteine 410/cysteine 426, and cysteine 437/cysteine 465. In terms of domain architecture, LDL-receptor class A spans 118–148; sequence IECDSSGTCINPSNWCDGVSHCPGGEDENRC. Positions 131, 134, 136, 144, and 145 each coordinate Ca(2+). One can recognise an SRCR domain in the interval 149-242; it reads VRLYGPNFIL…SKAVVSLRCI (94 aa). Asparagine 213 and asparagine 249 each carry an N-linked (GlcNAc...) asparagine glycan. Residues 256–492 enclose the Peptidase S1 domain; it reads IVGGESALPG…WIYRQMRADG (237 aa). Active-site charge relay system residues include histidine 296 and aspartate 345. The interval 340 to 470 is HKU1-CoV S protein-binding; that stretch reads KTKNNDIALM…WGSGCAKAYR (131 aa). The active-site Charge relay system is serine 441.

This sequence belongs to the peptidase S1 family. The catalytically active form interacts with ACE2. Proteolytically processed; by an autocatalytic mechanism. Autocleavage induces active conformation. As to expression, expressed in several tissues that comprise large populations of epithelial cells with the highest level of transcripts measured in the prostate gland. Expressed in type II pneumocytes in the lung (at protein level). Expressed strongly in small intestine. Also expressed in colon, stomach and salivary gland. Coexpressed with ACE2 within lung type II pneumocytes, ileal absorptive enterocytes, intestinal epithelial cells, cornea, gallbladder and nasal goblet secretory cells.

The protein resides in the cell membrane. It is found in the secreted. The catalysed reaction is The enzyme cleaves angiotensin-converting enzyme 2 (EC 3.4.17.23) and cleaves influenzea A and B virus and coronavirus spike glycoproteins at arginine residues.. In terms of biological role, plasma membrane-anchored serine protease that cleaves at arginine residues. Participates in proteolytic cascades of relevance for the normal physiologic function of the prostate. Androgen-induced TMPRSS2 activates several substrates that include pro-hepatocyte growth factor/HGF, the protease activated receptor-2/F2RL1 or matriptase/ST14 leading to extracellular matrix disruption and metastasis of prostate cancer cells. In addition, activates trigeminal neurons and contribute to both spontaneous pain and mechanical allodynia. Functionally, (Microbial infection) Facilitates human coronaviruses SARS-CoV and SARS-CoV-2 infections via two independent mechanisms, proteolytic cleavage of ACE2 receptor which promotes viral uptake, and cleavage of coronavirus spike glycoproteins which activates the glycoprotein for host cell entry. The cleavage of SARS-COV2 spike glycoprotein occurs between the S2 and S2' site. Upon SARS-CoV-2 infection, increases syncytia formation by accelerating the fusion process. Proteolytically cleaves and activates the spike glycoproteins of human coronavirus 229E (HCoV-229E) and human coronavirus EMC (HCoV-EMC) and the fusion glycoproteins F0 of Sendai virus (SeV), human metapneumovirus (HMPV), human parainfluenza 1, 2, 3, 4a and 4b viruses (HPIV). Essential for spread and pathogenesis of influenza A virus (strains H1N1, H3N2 and H7N9); involved in proteolytic cleavage and activation of hemagglutinin (HA) protein which is essential for viral infectivity. Its function is as follows. (Microbial infection) Receptor for human coronavirus HKU1-CoV, acts synergistically with disialoside glycans to facilitate the entry of the virus. After binding to cell-surface disialoside glycans, the viral S protein interacts with the inactive form of TMPRSS2 and inhibits its protease activity. This is Transmembrane protease serine 2 from Homo sapiens (Human).